The chain runs to 267 residues: 4-hydroxy-tetrahydrodipicolinate reductase (267 aa).

8 to 13 is a binding site for NAD(+); the sequence is GAAGRM. R35 provides a ligand contact to NADP(+). NAD(+) is bound by residues 98–100 and 122–125; these read GTT and AANF. The active-site Proton donor/acceptor is the H155. Residue H156 participates in (S)-2,3,4,5-tetrahydrodipicolinate binding. The Proton donor role is filled by K159. (S)-2,3,4,5-tetrahydrodipicolinate is bound at residue 165–166; sequence GT.

Belongs to the DapB family.

The protein localises to the cytoplasm. The catalysed reaction is (S)-2,3,4,5-tetrahydrodipicolinate + NAD(+) + H2O = (2S,4S)-4-hydroxy-2,3,4,5-tetrahydrodipicolinate + NADH + H(+). It catalyses the reaction (S)-2,3,4,5-tetrahydrodipicolinate + NADP(+) + H2O = (2S,4S)-4-hydroxy-2,3,4,5-tetrahydrodipicolinate + NADPH + H(+). It participates in amino-acid biosynthesis; L-lysine biosynthesis via DAP pathway; (S)-tetrahydrodipicolinate from L-aspartate: step 4/4. In terms of biological role, catalyzes the conversion of 4-hydroxy-tetrahydrodipicolinate (HTPA) to tetrahydrodipicolinate. This Azotobacter vinelandii (strain DJ / ATCC BAA-1303) protein is 4-hydroxy-tetrahydrodipicolinate reductase.